A 530-amino-acid chain; its full sequence is RNA-binding protein 39 (530 aa).

The interval 1-146 (MADDIDIEAM…PVREPIDNLT (146 aa)) is disordered. A2 is modified (N-acetylalanine). Residues 14–32 (PYKKDENKLSSANGHEERS) show a composition bias toward basic and acidic residues. 2 stretches are compositionally biased toward basic residues: residues 33 to 56 (KKRKKSKSRSRSHERKRSKSKERK) and 64 to 95 (KKSKSRERKRSRSKERRRSRSRSRDRRFRGRY). At Y95 the chain carries Phosphotyrosine. 2 positions are modified to phosphoserine: S97 and S100. Residue K111 forms a Glycyl lysine isopeptide (Lys-Gly) (interchain with G-Cter in SUMO2) linkage. S117 carries the phosphoserine modification. A Glycyl lysine isopeptide (Lys-Gly) (interchain with G-Cter in SUMO2) cross-link involves residue K119. Over residues 119–130 (KLSRRRSRSKSP) the composition is skewed to basic residues. A phosphoserine mark is found at S121 and S136. Residues 131 to 146 (FRKDKSPVREPIDNLT) show a composition bias toward basic and acidic residues. T146 is subject to Phosphothreonine. Residues 153–230 (RTVFCMQLAA…VPIIVQASQA (78 aa)) enclose the RRM 1 domain. K244 is covalently cross-linked (Glycyl lysine isopeptide (Lys-Gly) (interchain with G-Cter in SUMO2)). In terms of domain architecture, RRM 2 spans 250–328 (MRLYVGSLHF…RPMKVGHVTE (79 aa)). The tract at residues 291 to 355 (KGYGFITFSD…RTGIDLGTTG (65 aa)) is activating domain. An interaction with JUN region spans residues 291-406 (KGYGFITFSD…IDLQTRLSQQ (116 aa)). 3 positions are modified to phosphoserine: S334, S337, and S341. Positions 355–406 (GRLQLMARLAEGTGLQIPPAAQQALQMSGSLAFGAVAEFSFVIDLQTRLSQQ) are interaction with ESR1 and ESR2. Residues 406–530 (QTEASALAAA…ATQLLVPSRR (125 aa)) are interaction with NCOA6. Residues 445–508 (EIKDDVIEEC…KMITAAYVPL (64 aa)) form the RRM 3 domain.

It belongs to the splicing factor SR family. As to quaternary structure, interacts with NCOA6 and JUN. Interacts with ESR1 and ESR2, in the presence of estradiol (E2). Interacts with RSRC1 (via Arg/Ser-rich domain). Interacts with SF3B1. Interacts with ZNF106 (via N-terminus). In terms of processing, aryl sulfonamide anticancer drugs, such as indisulam (E7070) or E7820, promote ubiquitination and subsequent degradation by the DCX(DCAF15) complex. RBM39 degradation results in splicing defects and death in cancer cell lines. Aryl sulfonamide anticancer drugs change the substrate specificity of DCAF15 by acting as a molecular glue that promotes binding between DCAF15 and weak affinity interactor RBM39. As to expression, widely expressed. Highly expressed in pancreas, skeletal muscle, lung and brain. Expressed at intermediate level in kidney, liver and heart.

The protein localises to the nucleus speckle. Functionally, RNA-binding protein that acts as a pre-mRNA splicing factor. Acts by promoting exon inclusion via regulation of exon cassette splicing. Also acts as a transcriptional coactivator for steroid nuclear receptors ESR1/ER-alpha and ESR2/ER-beta, and JUN/AP-1, independently of the pre-mRNA splicing factor activity. This is RNA-binding protein 39 from Homo sapiens (Human).